The following is a 365-amino-acid chain: PR domain zinc finger protein 12 (365 aa).

Residues 86–203 (VEVIIAQSSI…PDQELLVWYG (118 aa)) enclose the SET domain. 3 C2H2-type zinc fingers span residues 243 to 265 (MRCVICHRGFNSRSNLRSHMRIH), 271 to 293 (FVCRFCNRRFSQSSTLRNHVRLH), and 299 to 323 (YKCQVCQSAYSQLAGLRAHQKSARH). The segment at 318–338 (QKSARHRPPSTALQAHSPALP) is disordered. Low complexity predominate over residues 329–338 (ALQAHSPALP).

This sequence belongs to the class V-like SAM-binding methyltransferase superfamily. Interacts with EHMT2.

The protein resides in the nucleus. Functionally, transcriptional regulator necessary for the development of nociceptive neurons, playing a key role in determining the nociceptive lineage from neural crest cell progenitors. Initiates neurogenesis and activates downstream pro-neuronal transcription factors, such as NEUROD1, BRN3A, and ISL1, specifically within nociceptive neurons, while repressing non-nociceptor cell fates. Essential for the proper function of nociceptors in adults, influencing both their excitability and their gene expression, thereby impacting how these neurons respond to various pain stimuli. The polypeptide is PR domain zinc finger protein 12 (Prdm12) (Mus musculus (Mouse)).